The chain runs to 377 residues: Queuine tRNA-ribosyltransferase (377 aa).

Residue aspartate 93 is the Proton acceptor of the active site. Residues 93 to 97 (DSGGF), aspartate 147, glutamine 190, and glycine 216 contribute to the substrate site. The segment at 247–253 (GVGTPDD) is RNA binding. The active-site Nucleophile is aspartate 266. Residues 271 to 275 (TRAGR) form an RNA binding; important for wobble base 34 recognition region. Residues cysteine 304, cysteine 306, cysteine 309, and histidine 335 each coordinate Zn(2+).

The protein belongs to the queuine tRNA-ribosyltransferase family. In terms of assembly, homodimer. Within each dimer, one monomer is responsible for RNA recognition and catalysis, while the other monomer binds to the replacement base PreQ1. It depends on Zn(2+) as a cofactor.

The catalysed reaction is 7-aminomethyl-7-carbaguanine + guanosine(34) in tRNA = 7-aminomethyl-7-carbaguanosine(34) in tRNA + guanine. It functions in the pathway tRNA modification; tRNA-queuosine biosynthesis. Catalyzes the base-exchange of a guanine (G) residue with the queuine precursor 7-aminomethyl-7-deazaguanine (PreQ1) at position 34 (anticodon wobble position) in tRNAs with GU(N) anticodons (tRNA-Asp, -Asn, -His and -Tyr). Catalysis occurs through a double-displacement mechanism. The nucleophile active site attacks the C1' of nucleotide 34 to detach the guanine base from the RNA, forming a covalent enzyme-RNA intermediate. The proton acceptor active site deprotonates the incoming PreQ1, allowing a nucleophilic attack on the C1' of the ribose to form the product. After dissociation, two additional enzymatic reactions on the tRNA convert PreQ1 to queuine (Q), resulting in the hypermodified nucleoside queuosine (7-(((4,5-cis-dihydroxy-2-cyclopenten-1-yl)amino)methyl)-7-deazaguanosine). This is Queuine tRNA-ribosyltransferase from Granulibacter bethesdensis (strain ATCC BAA-1260 / CGDNIH1).